The primary structure comprises 127 residues: Large ribosomal subunit protein eL22x (127 aa).

This sequence belongs to the eukaryotic ribosomal protein eL22 family.

The chain is Large ribosomal subunit protein eL22x (RPL22A) from Arabidopsis thaliana (Mouse-ear cress).